Consider the following 311-residue polypeptide: MVELEDLPSVGEKTAEKLRDAGFADMMRLATATPKELSVKAEIGEGVAEKVIEAARKSEKIDFETAYDVLERRRDVGHISVGSEGFNDLIGGGIETQSITEVFGEFGSGKSQISHELAVTVQLPPEKGGLDGECVFIDTENTFRPERIEQIANGFELDIDEVLQKIHVARAFNSSHQILMAEKINELIQQGNNIKLVIVDSLMAHFRAEYVGRESLAVRQQKLNQHLHALQQIANTYNVAVFITNQVQAKPDSFFGSPTKAIGGHVLGHASTYRIWLKKGLAGKRIARLVDSPHLPEGECVFKIKTEGIVD.

ATP is bound at residue 104–111; it reads GEFGSGKS.

Belongs to the eukaryotic RecA-like protein family.

Involved in DNA repair and in homologous recombination. Binds and assemble on single-stranded DNA to form a nucleoprotein filament. Hydrolyzes ATP in a ssDNA-dependent manner and promotes DNA strand exchange between homologous DNA molecules. This chain is DNA repair and recombination protein RadA, found in Methanobrevibacter smithii (strain ATCC 35061 / DSM 861 / OCM 144 / PS).